We begin with the raw amino-acid sequence, 372 residues long: MALWRCSSSWLSSVSRSSGGVGGGESKVSPEIAPVSGGEGEGEEEEGEEERWSRLLPELLTEIMRRVDAGAERWPPRRDVVACACVCRRWRDAAVSVVRPPLECGRITFPSSLKQPGPRDAPMHCFIRRNKKNSTFYLYLSLTQALTDKGKFLLAARRFRNGAHTEYIISYDCDDLFPGSNSYVGKLRSDFLGTKFIIYDSQPPYDGAKPSRSQSSRRFASKQINPNVSGGNYEVGQVSYKFNFLKSRGPRRMQCNIQCPVGQSTASDPLKKLISTSSPLALRNKAPRWHEHLQCWCLNFHGRVTVASVKNFQLVAPAGTSDPWGIADEETVILQFGKIEDDAFTMDYRQPLSAFQAFAICLTSFGTKLACE.

The disordered stretch occupies residues 1 to 51; that stretch reads MALWRCSSSWLSSVSRSSGGVGGGESKVSPEIAPVSGGEGEGEEEEGEEER. Positions 7–18 are enriched in low complexity; that stretch reads SSSWLSSVSRSS. A compositionally biased stretch (acidic residues) spans 40 to 49; the sequence is GEGEEEEGEE. The 56-residue stretch at 50-105 folds into the F-box domain; sequence ERWSRLLPELLTEIMRRVDAGAERWPPRRDVVACACVCRRWRDAAVSVVRPPLECG.

The protein belongs to the TUB family. In terms of tissue distribution, ubiquitous.

This chain is Tubby-like F-box protein 9 (TULP9), found in Oryza sativa subsp. japonica (Rice).